We begin with the raw amino-acid sequence, 210 residues long: MSKKSRISITHLLNPIQEENLKEKLQEINNQLISLCSSLPKRQSLPGPSSDILRFLSRNNLDPQEIGLIKTTYRLSTLLSKLREHEIVFNVVTKDHLLKKGVPNHYAASYRGHRFTRENVQILETWYRNHIDNPYLDHNSQQYLAQKTNLSKIQIKNWVANRRRKQKSIYISLFDIHNIESGEYAYIEKVCYIIIIICHLFLVFSLSCLT.

Positions 108 to 170 form a DNA-binding region, homeobox; TALE-type; it reads ASYRGHRFTR…NRRRKQKSIY (63 aa).

It belongs to the TALE/M-ATYP homeobox family.

It is found in the nucleus. Its function is as follows. Mating type proteins are sequence specific DNA-binding proteins that act as master switches in yeast differentiation by controlling gene expression in a cell type-specific fashion. This is Mating-type-like protein ALPHA2, silenced copy at MTL3 (MTL3alpha2) from Candida glabrata (strain ATCC 2001 / BCRC 20586 / JCM 3761 / NBRC 0622 / NRRL Y-65 / CBS 138) (Yeast).